Here is a 517-residue protein sequence, read N- to C-terminus: ATP synthase subunit beta (517 aa).

Composition is skewed to low complexity over residues 1–22 (MAKA…AAKA) and 29–42 (AKTA…APKA). Residues 1–42 (MAKAATPKTTAAAEAKPAAAKAPAKKAPAKTAAAKSDAAPKA) form a disordered region. 195-202 (GGAGVGKT) is a binding site for ATP.

This sequence belongs to the ATPase alpha/beta chains family. In terms of assembly, F-type ATPases have 2 components, CF(1) - the catalytic core - and CF(0) - the membrane proton channel. CF(1) has five subunits: alpha(3), beta(3), gamma(1), delta(1), epsilon(1). CF(0) has three main subunits: a(1), b(2) and c(9-12). The alpha and beta chains form an alternating ring which encloses part of the gamma chain. CF(1) is attached to CF(0) by a central stalk formed by the gamma and epsilon chains, while a peripheral stalk is formed by the delta and b chains.

The protein resides in the cell inner membrane. It catalyses the reaction ATP + H2O + 4 H(+)(in) = ADP + phosphate + 5 H(+)(out). Functionally, produces ATP from ADP in the presence of a proton gradient across the membrane. The catalytic sites are hosted primarily by the beta subunits. The chain is ATP synthase subunit beta from Brucella anthropi (strain ATCC 49188 / DSM 6882 / CCUG 24695 / JCM 21032 / LMG 3331 / NBRC 15819 / NCTC 12168 / Alc 37) (Ochrobactrum anthropi).